We begin with the raw amino-acid sequence, 551 residues long: Probable glucomannan 4-beta-mannosyltransferase 3 (551 aa).

Residues 60–80 (ACLALSAMLLADAVLMAAACF) traverse the membrane as a helical segment. Asp154 is a catalytic residue. Substrate contacts are provided by Asp213 and Asp215. The active site involves Asp307. 4 helical membrane passes run 386 to 406 (VVAH…SVLI), 409 to 429 (VTVP…LHAI), 504 to 524 (ILFS…GGDY), and 525 to 545 (YFVY…GFCG).

The protein belongs to the glycosyltransferase 2 family. Plant cellulose synthase-like A subfamily.

The protein localises to the golgi apparatus membrane. The enzyme catalyses GDP-mannose + (glucomannan)n = GDP + (glucomannan)n+1.. Probable mannan synthase which consists of a 4-beta-mannosyltransferase activity on mannan using GDP-mannose. The beta-1,4-mannan product is the backbone for galactomannan synthesis by galactomannan galactosyltransferase. Galactomannan is a noncellulosic polysaccharides of plant cell wall. In Oryza sativa subsp. japonica (Rice), this protein is Probable glucomannan 4-beta-mannosyltransferase 3.